A 375-amino-acid chain; its full sequence is Anhydro-N-acetylmuramic acid kinase 1 (375 aa).

20–27 (GTSFDGVD) provides a ligand contact to ATP. Positions 351-375 (APSTTGVAAPVGGGRRSKPGARELS) are disordered.

Belongs to the anhydro-N-acetylmuramic acid kinase family.

It carries out the reaction 1,6-anhydro-N-acetyl-beta-muramate + ATP + H2O = N-acetyl-D-muramate 6-phosphate + ADP + H(+). The protein operates within amino-sugar metabolism; 1,6-anhydro-N-acetylmuramate degradation. It functions in the pathway cell wall biogenesis; peptidoglycan recycling. Catalyzes the specific phosphorylation of 1,6-anhydro-N-acetylmuramic acid (anhMurNAc) with the simultaneous cleavage of the 1,6-anhydro ring, generating MurNAc-6-P. Is required for the utilization of anhMurNAc either imported from the medium or derived from its own cell wall murein, and thus plays a role in cell wall recycling. This Jannaschia sp. (strain CCS1) protein is Anhydro-N-acetylmuramic acid kinase 1.